Reading from the N-terminus, the 62-residue chain is Large ribosomal subunit protein uL30 (62 aa).

The protein belongs to the universal ribosomal protein uL30 family. Part of the 50S ribosomal subunit.

This is Large ribosomal subunit protein uL30 from Kosmotoga olearia (strain ATCC BAA-1733 / DSM 21960 / TBF 19.5.1).